The chain runs to 307 residues: 4-hydroxy-3-methylbut-2-enyl diphosphate reductase (307 aa).

Residue C12 coordinates [4Fe-4S] cluster. (2E)-4-hydroxy-3-methylbut-2-enyl diphosphate is bound by residues H41 and H74. Dimethylallyl diphosphate is bound by residues H41 and H74. The isopentenyl diphosphate site is built by H41 and H74. Residue C96 participates in [4Fe-4S] cluster binding. H124 provides a ligand contact to (2E)-4-hydroxy-3-methylbut-2-enyl diphosphate. H124 serves as a coordination point for dimethylallyl diphosphate. H124 contributes to the isopentenyl diphosphate binding site. E126 serves as the catalytic Proton donor. Residue T165 coordinates (2E)-4-hydroxy-3-methylbut-2-enyl diphosphate. C195 contributes to the [4Fe-4S] cluster binding site. Residues S223, S224, N225, and S267 each coordinate (2E)-4-hydroxy-3-methylbut-2-enyl diphosphate. Dimethylallyl diphosphate is bound by residues S223, S224, N225, and S267. The isopentenyl diphosphate site is built by S223, S224, N225, and S267.

It belongs to the IspH family. It depends on [4Fe-4S] cluster as a cofactor.

It catalyses the reaction isopentenyl diphosphate + 2 oxidized [2Fe-2S]-[ferredoxin] + H2O = (2E)-4-hydroxy-3-methylbut-2-enyl diphosphate + 2 reduced [2Fe-2S]-[ferredoxin] + 2 H(+). The catalysed reaction is dimethylallyl diphosphate + 2 oxidized [2Fe-2S]-[ferredoxin] + H2O = (2E)-4-hydroxy-3-methylbut-2-enyl diphosphate + 2 reduced [2Fe-2S]-[ferredoxin] + 2 H(+). It functions in the pathway isoprenoid biosynthesis; dimethylallyl diphosphate biosynthesis; dimethylallyl diphosphate from (2E)-4-hydroxy-3-methylbutenyl diphosphate: step 1/1. The protein operates within isoprenoid biosynthesis; isopentenyl diphosphate biosynthesis via DXP pathway; isopentenyl diphosphate from 1-deoxy-D-xylulose 5-phosphate: step 6/6. Catalyzes the conversion of 1-hydroxy-2-methyl-2-(E)-butenyl 4-diphosphate (HMBPP) into a mixture of isopentenyl diphosphate (IPP) and dimethylallyl diphosphate (DMAPP). Acts in the terminal step of the DOXP/MEP pathway for isoprenoid precursor biosynthesis. The protein is 4-hydroxy-3-methylbut-2-enyl diphosphate reductase of Magnetococcus marinus (strain ATCC BAA-1437 / JCM 17883 / MC-1).